Here is a 144-residue protein sequence, read N- to C-terminus: Large ribosomal subunit protein uL15 (144 aa).

The interval 1 to 53 (MRLNTLSPAEGSKHASKRPGRGIGSGLGKTGGRGHKGQKSRSGGGVRRGFEGG) is disordered. Over residues 21-31 (RGIGSGLGKTG) the composition is skewed to gly residues.

The protein belongs to the universal ribosomal protein uL15 family. Part of the 50S ribosomal subunit.

Binds to the 23S rRNA. This is Large ribosomal subunit protein uL15 from Sodalis glossinidius (strain morsitans).